Reading from the N-terminus, the 510-residue chain is ATP synthase subunit alpha 1 (510 aa).

Gly169–Thr176 provides a ligand contact to ATP.

This sequence belongs to the ATPase alpha/beta chains family. As to quaternary structure, F-type ATPases have 2 components, CF(1) - the catalytic core - and CF(0) - the membrane proton channel. CF(1) has five subunits: alpha(3), beta(3), gamma(1), delta(1), epsilon(1). CF(0) has three main subunits: a(1), b(2) and c(9-12). The alpha and beta chains form an alternating ring which encloses part of the gamma chain. CF(1) is attached to CF(0) by a central stalk formed by the gamma and epsilon chains, while a peripheral stalk is formed by the delta and b chains.

Its subcellular location is the cell inner membrane. The enzyme catalyses ATP + H2O + 4 H(+)(in) = ADP + phosphate + 5 H(+)(out). Produces ATP from ADP in the presence of a proton gradient across the membrane. The alpha chain is a regulatory subunit. In Marinomonas sp. (strain MWYL1), this protein is ATP synthase subunit alpha 1.